The chain runs to 117 residues: Large ribosomal subunit protein bL20 (117 aa).

This sequence belongs to the bacterial ribosomal protein bL20 family.

In terms of biological role, binds directly to 23S ribosomal RNA and is necessary for the in vitro assembly process of the 50S ribosomal subunit. It is not involved in the protein synthesizing functions of that subunit. The protein is Large ribosomal subunit protein bL20 of Rickettsia bellii (strain OSU 85-389).